An 842-amino-acid polypeptide reads, in one-letter code: Glucans biosynthesis glucosyltransferase H (842 aa).

The next 8 membrane-spanning stretches (helical) occupy residues Ile140–Leu160, Ile194–Met214, Val513–Leu533, Ile568–Leu588, Phe600–Val620, Met622–Ser642, Phe656–Leu676, and Phe680–Ile700.

This sequence belongs to the glycosyltransferase 2 family. OpgH subfamily.

The protein resides in the cell inner membrane. The protein operates within glycan metabolism; osmoregulated periplasmic glucan (OPG) biosynthesis. Involved in the biosynthesis of osmoregulated periplasmic glucans (OPGs). The sequence is that of Glucans biosynthesis glucosyltransferase H from Klebsiella pneumoniae (strain 342).